The primary structure comprises 89 residues: Large ribosomal subunit protein bL27 (89 aa).

Positions 1-26 (MAHKKGVGSSRNGRDSESKRLGVKEG) are disordered. The segment covering 12–26 (NGRDSESKRLGVKEG) has biased composition (basic and acidic residues).

Belongs to the bacterial ribosomal protein bL27 family.

In Desulforamulus reducens (strain ATCC BAA-1160 / DSM 100696 / MI-1) (Desulfotomaculum reducens), this protein is Large ribosomal subunit protein bL27.